The primary structure comprises 782 residues: Acetazolamide conferring resistance protein zam (782 aa).

The RNB domain maps to 270–579; the sequence is EVALSLESQA…QRLLKLVLTE (310 aa). The S1 motif domain maps to 655 to 736; it reads GEIFRGLITG…YRQQIDLGAV (82 aa). The disordered stretch occupies residues 737–782; that stretch reads NNAPKDSANMDFDDDDEDGDEREEQDTMDWDAMEDGDDDEGGAVIF. Over residues 747 to 782 the composition is skewed to acidic residues; that stretch reads DFDDDDEDGDEREEQDTMDWDAMEDGDDDEGGAVIF.

The protein belongs to the RNR ribonuclease family.

Not known; control resistance to the carbonic anhydrase inhibitor acetazolamide. The protein is Acetazolamide conferring resistance protein zam (zam) of Synechocystis sp. (strain ATCC 27184 / PCC 6803 / Kazusa).